We begin with the raw amino-acid sequence, 117 residues long: uncharacterized protein (117 aa).

It is found in the cytoplasm. The protein localises to the nucleus. This is an uncharacterized protein from Saccharomyces cerevisiae (strain ATCC 204508 / S288c) (Baker's yeast).